The primary structure comprises 404 residues: Cysteine desulfurase IscS (404 aa).

Residues 75–76 (AT), N155, Q183, and 203–205 (SGH) each bind pyridoxal 5'-phosphate. Residue K206 is modified to N6-(pyridoxal phosphate)lysine. T243 lines the pyridoxal 5'-phosphate pocket. The Cysteine persulfide intermediate role is filled by C328. C328 is a [2Fe-2S] cluster binding site.

It belongs to the class-V pyridoxal-phosphate-dependent aminotransferase family. NifS/IscS subfamily. Homodimer. Forms a heterotetramer with IscU, interacts with other sulfur acceptors. Pyridoxal 5'-phosphate is required as a cofactor.

The protein localises to the cytoplasm. It carries out the reaction (sulfur carrier)-H + L-cysteine = (sulfur carrier)-SH + L-alanine. Its pathway is cofactor biosynthesis; iron-sulfur cluster biosynthesis. Its function is as follows. Master enzyme that delivers sulfur to a number of partners involved in Fe-S cluster assembly, tRNA modification or cofactor biosynthesis. Catalyzes the removal of elemental sulfur atoms from cysteine to produce alanine. Functions as a sulfur delivery protein for Fe-S cluster synthesis onto IscU, an Fe-S scaffold assembly protein, as well as other S acceptor proteins. The chain is Cysteine desulfurase IscS from Shewanella baltica (strain OS155 / ATCC BAA-1091).